We begin with the raw amino-acid sequence, 223 residues long: Neurotrophic factor BDNF precursor form (223 aa).

The signal sequence occupies residues 1–5; it reads SCMKA. Residues 6–114 constitute a propeptide that is removed on maturation; sequence APMKEVGVRG…AANMSXRVRR (109 aa). Asn107 carries an N-linked (GlcNAc...) asparagine glycan. Intrachain disulfides connect Cys127–Cys194 and Cys172–Cys223.

This sequence belongs to the NGF-beta family.

It is found in the secreted. In terms of biological role, promotes the survival of neuronal populations that are all located either in the central nervous system or directly connected to it. The chain is Neurotrophic factor BDNF precursor form (BDNF) from Eryx jayakari (Arabian sand boa).